Here is a 513-residue protein sequence, read N- to C-terminus: Probable lipid II flippase MurJ (513 aa).

15 helical membrane-spanning segments follow: residues 3–23 (ILKS…LGFM), 25–45 (DLLI…FLAF), 83–103 (FISN…AFGI), 133–153 (IMFP…ILNA), 162–182 (YSSI…TAYF), 186–206 (ILSL…YQFP), 221–241 (ILNL…LGMS), 245–265 (VSII…ISWI), 271–291 (LVEF…LPLL), 313–333 (LVCI…ESLI), 354–374 (IEFY…LAGF), 382–402 (TPMK…IFFI), 405–425 (FQYT…FFLL), 441–461 (WLRF…LLFI), and 481–501 (LFYI…CLGL).

The protein belongs to the MurJ/MviN family.

It localises to the cell inner membrane. It participates in cell wall biogenesis; peptidoglycan biosynthesis. In terms of biological role, involved in peptidoglycan biosynthesis. Transports lipid-linked peptidoglycan precursors from the inner to the outer leaflet of the cytoplasmic membrane. The polypeptide is Probable lipid II flippase MurJ (Buchnera aphidicola subsp. Baizongia pistaciae (strain Bp)).